We begin with the raw amino-acid sequence, 932 residues long: Transcription initiation factor TFIID subunit 3 (932 aa).

Disordered stretches follow at residues 130–201 (PIVS…LSTK), 213–347 (REPL…PSAM), 403–465 (REPD…DNSW), and 480–579 (LGAP…PWRE). Residues 158–171 (LEEDDEMEEEEVIN) show a composition bias toward acidic residues. 4 positions are modified to phosphoserine: Ser-183, Ser-199, Ser-229, and Ser-243. Lys-266 is subject to N6-acetyllysine. Polar residues predominate over residues 266 to 283 (KSFTPKTKTKASSPGQKT). 3 positions are modified to phosphoserine: Ser-291, Ser-297, and Ser-301. Low complexity predominate over residues 408 to 423 (FEFSSGSESEGDTFTS). A compositionally biased stretch (polar residues) spans 436-446 (KASTSSNNFTK). Low complexity predominate over residues 447-461 (SLATPLPLSSGTSSS). The residue at position 502 (Thr-502) is a Phosphothreonine. A compositionally biased stretch (basic and acidic residues) spans 505–515 (PLHKGYEEKAK). Over residues 524–538 (KKLKKELKTKLKKKE) the composition is skewed to basic residues. Residues 539 to 579 (KQRDRERERERNKERSKEKDKMREREKEKEAGKELKYPWRE) are compositionally biased toward basic and acidic residues. A Glycyl lysine isopeptide (Lys-Gly) (interchain with G-Cter in SUMO2) cross-link involves residue Lys-582. Residues 607-657 (KDGIVRREREKHKDKKKDRERSKREKDKRERERLKEKNREDKIKAPPTQLV) are disordered. The segment covering 623–650 (KDRERSKREKDKRERERLKEKNREDKIK) has biased composition (basic and acidic residues). Position 669 is a phosphoserine (Ser-669). The segment at 681–746 (AFSPMLPEKL…EKEKEKHKHE (66 aa)) is disordered. The segment covering 689–702 (KLFEEKEKPKEKER) has biased composition (basic and acidic residues). Over residues 703–714 (KKDKKEKKKKKE) the composition is skewed to basic residues. The span at 715–740 (KEKEKEKKEREREKERREREKREKEK) shows a compositional bias: basic and acidic residues. A Glycyl lysine isopeptide (Lys-Gly) (interchain with G-Cter in SUMO2) cross-link involves residue Lys-749. At Ser-758 the chain carries Phosphoserine. N6-acetyllysine is present on Lys-779. The PHD-type zinc-finger motif lies at 867-917 (IWICPGCNKPDDGSPMIGCDDCDDWYHWPCVGIMAAPPEEMQWFCPKCANK).

Belongs to the TAF3 family. Component of the TFIID basal transcription factor complex, composed of TATA-box-binding protein TBP, and a number of TBP-associated factors (TAFs), including TAF1, TAF2, TAF3, TAF4, TAF5, TAF6, TAF7, TAF8, TAF9, TAF10, TAF11, TAF12 and TAF13. Interacts with TAF10 via histone fold. Interacts with TAF13, TBP, SAP130 and GCN5L2. Interacts with TBPL2.

The protein localises to the nucleus. Its function is as follows. The TFIID basal transcription factor complex plays a major role in the initiation of RNA polymerase II (Pol II)-dependent transcription. TFIID recognizes and binds promoters with or without a TATA box via its subunit TBP, a TATA-box-binding protein, and promotes assembly of the pre-initiation complex (PIC). The TFIID complex consists of TBP and TBP-associated factors (TAFs), including TAF1, TAF2, TAF3, TAF4, TAF5, TAF6, TAF7, TAF8, TAF9, TAF10, TAF11, TAF12 and TAF13. The TFIID complex structure can be divided into 3 modules TFIID-A, TFIID-B, and TFIID-C. TAF3 forms the TFIID-A module together with TAF5 and TBP. Required in complex with TBPL2 for the differentiation of myoblasts into myocytes. The TAF3-TBPL2 complex replaces TFIID at specific promoters at an early stage in the differentiation process. The sequence is that of Transcription initiation factor TFIID subunit 3 (Taf3) from Mus musculus (Mouse).